A 132-amino-acid chain; its full sequence is Small ribosomal subunit protein uS8 (132 aa).

It belongs to the universal ribosomal protein uS8 family. In terms of assembly, part of the 30S ribosomal subunit. Contacts proteins S5 and S12.

Functionally, one of the primary rRNA binding proteins, it binds directly to 16S rRNA central domain where it helps coordinate assembly of the platform of the 30S subunit. This is Small ribosomal subunit protein uS8 from Rickettsia akari (strain Hartford).